Consider the following 256-residue polypeptide: Protein FixA (256 aa).

This sequence belongs to the ETF beta-subunit/FixA family. As to quaternary structure, heterodimer of FixA and FixB.

The protein operates within amine and polyamine metabolism; carnitine metabolism. Its function is as follows. Required for anaerobic carnitine reduction. May bring reductant to CaiA. The chain is Protein FixA from Escherichia fergusonii (strain ATCC 35469 / DSM 13698 / CCUG 18766 / IAM 14443 / JCM 21226 / LMG 7866 / NBRC 102419 / NCTC 12128 / CDC 0568-73).